The sequence spans 410 residues: DNA replication and repair protein RecF (410 aa).

30 to 37 (GPNGHGKT) contributes to the ATP binding site.

Belongs to the RecF family.

The protein localises to the cytoplasm. The RecF protein is involved in DNA metabolism; it is required for DNA replication and normal SOS inducibility. RecF binds preferentially to single-stranded, linear DNA. It also seems to bind ATP. The polypeptide is DNA replication and repair protein RecF (Rhodococcus jostii (strain RHA1)).